Here is a 168-residue protein sequence, read N- to C-terminus: MQMVINEMKQKAIYPGTFDPVTNGHIDIITRASTIFPELIVAVASNKNKRPYLSWETRISLLEESVGHLTGVRVVGFDNLLIDFVLEQSAGIILRGLRAVSDFEYEFQLAGMNRKLSKKVETLFLTPAEHLMYISSTLVREIAALNGDISQFVPPNVVRELKKRQNEI.

Threonine 17 provides a ligand contact to substrate. ATP is bound by residues 17–18 (TF) and histidine 25. Residues lysine 49, leucine 81, and arginine 95 each contribute to the substrate site. ATP contacts are provided by residues 96-98 (GLR), glutamate 106, and 131-137 (LMYISST).

The protein belongs to the bacterial CoaD family. In terms of assembly, homohexamer. Mg(2+) serves as cofactor.

The protein localises to the cytoplasm. It catalyses the reaction (R)-4'-phosphopantetheine + ATP + H(+) = 3'-dephospho-CoA + diphosphate. It functions in the pathway cofactor biosynthesis; coenzyme A biosynthesis; CoA from (R)-pantothenate: step 4/5. Its function is as follows. Reversibly transfers an adenylyl group from ATP to 4'-phosphopantetheine, yielding dephospho-CoA (dPCoA) and pyrophosphate. This Legionella pneumophila (strain Paris) protein is Phosphopantetheine adenylyltransferase.